The following is a 56-amino-acid chain: Large ribosomal subunit protein bL33 (56 aa).

Belongs to the bacterial ribosomal protein bL33 family.

The protein is Large ribosomal subunit protein bL33 (rpmG) of Rickettsia prowazekii (strain Madrid E).